The following is a 181-amino-acid chain: Histone deacetylase complex subunit SAP30L (181 aa).

Residues 26 to 74 (CCLIDGGERCPRPAGNASFSKRVQKSISQKKLKLDIDKSVRHLYICDFH) form an Atypical zinc finger. Positions 82–103 (RNKRKRKTSDDGGDSPEHETDV) are disordered. A Nuclear localization signal (NLS) motif is present at residues 83–88 (NKRKRK). The tract at residues 85 to 87 (RKR) is important for DNA and phosphoinositide binding.

The protein belongs to the SAP30 family. Interacts with components of the histone deacetylase complex sin3a, hdac1 and hdac2. Binds histones and nucleosomes.

The protein localises to the nucleus. The protein resides in the nucleolus. Functionally, functions as a transcription repressor, probably via its interaction with histone deacetylase complexes. Involved in the functional recruitment of the class 1 Sin3-histone deacetylase complex (HDAC) to the nucleolus. Binds DNA, apparently without sequence-specificity, and bends bound double-stranded DNA. Binds phosphoinositol phosphates (phosphoinositol 3-phosphate, phosphoinositol 4-phosphate and phosphoinositol 5-phosphate) via the same basic sequence motif that mediates DNA binding and nuclear import. This Xenopus tropicalis (Western clawed frog) protein is Histone deacetylase complex subunit SAP30L (sap30l).